The sequence spans 145 residues: Deoxyuridine 5'-triphosphate nucleotidohydrolase (145 aa).

Residues 62 to 64 (RSG), Asn-75, 79 to 81 (TVD), and Lys-89 each bind substrate.

The protein belongs to the dUTPase family. The cofactor is Mg(2+).

The enzyme catalyses dUTP + H2O = dUMP + diphosphate + H(+). It participates in pyrimidine metabolism; dUMP biosynthesis; dUMP from dCTP (dUTP route): step 2/2. Its function is as follows. This enzyme is involved in nucleotide metabolism: it produces dUMP, the immediate precursor of thymidine nucleotides and it decreases the intracellular concentration of dUTP so that uracil cannot be incorporated into DNA. The protein is Deoxyuridine 5'-triphosphate nucleotidohydrolase of Helicobacter pylori (strain J99 / ATCC 700824) (Campylobacter pylori J99).